Here is a 790-residue protein sequence, read N- to C-terminus: Ice-structuring glycoprotein (790 aa).

Residues 1–5 (VTAAP) constitute a propeptide that is removed on maturation.

Post-translationally, O-glycosylated; contains disaccharide galactose-N-acetylgalactosamine attached to threonines in AFGP8 and AFGP7. In terms of tissue distribution, synthesized by the liver and secreted into the blood from which they become distributed to almost the entire extracellular space.

The protein localises to the secreted. Antifreeze proteins lower the blood freezing point. In Notothenia neglecta (Yellowbelly rockcod), this protein is Ice-structuring glycoprotein (afgp8).